The primary structure comprises 474 residues: tRNA-2-methylthio-N(6)-dimethylallyladenosine synthase (474 aa).

The MTTase N-terminal domain maps to 3–120 (KKLHIKTWGC…LPEMINSVRG (118 aa)). Cys12, Cys49, Cys83, Cys157, Cys161, and Cys164 together coordinate [4Fe-4S] cluster. A Radical SAM core domain is found at 143–375 (RAEGPTAFVS…QERINQQAMA (233 aa)). One can recognise a TRAM domain in the interval 378-441 (RRMLGTVQRI…TNSLRGKIVR (64 aa)).

The protein belongs to the methylthiotransferase family. MiaB subfamily. In terms of assembly, monomer. The cofactor is [4Fe-4S] cluster.

The protein localises to the cytoplasm. It carries out the reaction N(6)-dimethylallyladenosine(37) in tRNA + (sulfur carrier)-SH + AH2 + 2 S-adenosyl-L-methionine = 2-methylsulfanyl-N(6)-dimethylallyladenosine(37) in tRNA + (sulfur carrier)-H + 5'-deoxyadenosine + L-methionine + A + S-adenosyl-L-homocysteine + 2 H(+). In terms of biological role, catalyzes the methylthiolation of N6-(dimethylallyl)adenosine (i(6)A), leading to the formation of 2-methylthio-N6-(dimethylallyl)adenosine (ms(2)i(6)A) at position 37 in tRNAs that read codons beginning with uridine. The protein is tRNA-2-methylthio-N(6)-dimethylallyladenosine synthase of Klebsiella pneumoniae subsp. pneumoniae (strain ATCC 700721 / MGH 78578).